The primary structure comprises 160 residues: UPF0225 protein CGSHiGG_04185 (160 aa).

The protein belongs to the UPF0225 family.

The chain is UPF0225 protein CGSHiGG_04185 from Haemophilus influenzae (strain PittGG).